Reading from the N-terminus, the 781-residue chain is Dynamin-related protein dnm1 (781 aa).

The region spanning Phe23 to Pro328 is the Dynamin-type G domain. Residues Gly33 to Ser40 form a G1 motif region. Gly33–Ser40 is a GTP binding site. The segment at Val59–Arg61 is G2 motif. Residues Lys76–Gly103 are disordered. The G3 motif stretch occupies residues Asp170–Gly173. Residues Asp170 to Leu174 and Thr239 to Asp242 each bind GTP. The interval Thr239–Asp242 is G4 motif. The tract at residues Val269–Ser272 is G5 motif. Residues Val694–Phe781 enclose the GED domain.

The protein belongs to the TRAFAC class dynamin-like GTPase superfamily. Dynamin/Fzo/YdjA family.

Its subcellular location is the cytoplasm. The protein resides in the mitochondrion outer membrane. It carries out the reaction GTP + H2O = GDP + phosphate + H(+). Its function is as follows. Microtubule-associated force-producing protein that mediates mitochondrial fission during interphasic growth and at cell division. Fission of mitochondria occurs in many cell types and constitutes an important step in mitochondria morphology, which is balanced between fusion and fission. With vps1, acts redundantly in peroxisome biogenesis, which is under cell cycle control. The protein is Dynamin-related protein dnm1 (dnm1) of Schizosaccharomyces pombe (strain 972 / ATCC 24843) (Fission yeast).